The chain runs to 226 residues: Putative ABC transporter ATP-binding protein BQ02700 (226 aa).

Residues 4 to 225 (IKFDKVTQVF…VAIKEYIRRM (222 aa)) form the ABC transporter domain. 35–42 (GANGSGKS) lines the ATP pocket.

The protein belongs to the ABC transporter superfamily.

It localises to the cell inner membrane. Functionally, probably part of an ABC transporter complex. Responsible for energy coupling to the transport system. This is Putative ABC transporter ATP-binding protein BQ02700 from Bartonella quintana (strain Toulouse) (Rochalimaea quintana).